Reading from the N-terminus, the 442-residue chain is tRNA modification GTPase MnmE (442 aa).

3 residues coordinate (6S)-5-formyl-5,6,7,8-tetrahydrofolate: Arg-24, Glu-82, and Lys-120. One can recognise a TrmE-type G domain in the interval 217-367 (GLHIVITGEP…LISLIKKKAE (151 aa)). GTP contacts are provided by residues 227-232 (NVGKST), 246-252 (SEYAGTT), and 271-274 (DTAG). Residue Ser-231 coordinates Mg(2+). Ser-246 provides a ligand contact to K(+). A Mg(2+)-binding site is contributed by Thr-252. Lys-442 contributes to the (6S)-5-formyl-5,6,7,8-tetrahydrofolate binding site.

It belongs to the TRAFAC class TrmE-Era-EngA-EngB-Septin-like GTPase superfamily. TrmE GTPase family. Homodimer. Heterotetramer of two MnmE and two MnmG subunits. K(+) serves as cofactor.

The protein localises to the cytoplasm. Its function is as follows. Exhibits a very high intrinsic GTPase hydrolysis rate. Involved in the addition of a carboxymethylaminomethyl (cmnm) group at the wobble position (U34) of certain tRNAs, forming tRNA-cmnm(5)s(2)U34. In Wolbachia pipientis subsp. Culex pipiens (strain wPip), this protein is tRNA modification GTPase MnmE.